The following is a 294-amino-acid chain: MGDFGNVLTAMITPFKADGSVDYGVAAELAVHLANNGTDTLVMCGTTGESPTLSWDEEYQLFVEVLQSVAGKAKVIAGCGSNSTKEAIAATQKASKIGVHGSLQVVPYYNKPPQAGLEAHFQAIAQACPDLPLLLYNVPGRTGQNLQPETVARLAEVSNIVGIKESTGSIDQASEIRRLTPKEFHIYSGDDYMTLPLLAIGAKGVVSVASHLVGNQLQQMIQAFSAGKIEVARDIHLQLFPLFKALFLTSNPIPVKKALKLQGWEVGSTRPPLCEADLEVSQKLEGVLKELSLI.

Thr47 serves as a coordination point for pyruvate. Tyr136 functions as the Proton donor/acceptor in the catalytic mechanism. The active-site Schiff-base intermediate with substrate is Lys164. Val206 contacts pyruvate.

The protein belongs to the DapA family. As to quaternary structure, homotetramer; dimer of dimers.

Its subcellular location is the cytoplasm. It catalyses the reaction L-aspartate 4-semialdehyde + pyruvate = (2S,4S)-4-hydroxy-2,3,4,5-tetrahydrodipicolinate + H2O + H(+). Its pathway is amino-acid biosynthesis; L-lysine biosynthesis via DAP pathway; (S)-tetrahydrodipicolinate from L-aspartate: step 3/4. In terms of biological role, catalyzes the condensation of (S)-aspartate-beta-semialdehyde [(S)-ASA] and pyruvate to 4-hydroxy-tetrahydrodipicolinate (HTPA). The protein is 4-hydroxy-tetrahydrodipicolinate synthase of Nostoc punctiforme (strain ATCC 29133 / PCC 73102).